The following is a 90-amino-acid chain: Progonadoliberin-3 (90 aa).

An N-terminal signal peptide occupies residues 1–23; it reads MEASSRVTVQVLLLALVVQVTLS. Glutamine 24 is modified (pyrrolidone carboxylic acid). Glycine 33 carries the post-translational modification Glycine amide.

Belongs to the GnRH family.

The protein resides in the secreted. Stimulates the secretion of gonadotropins. This Sparus aurata (Gilthead sea bream) protein is Progonadoliberin-3 (gnrh3).